We begin with the raw amino-acid sequence, 257 residues long: Imidazole glycerol phosphate synthase subunit HisF (257 aa).

Catalysis depends on residues Asp11 and Asp130.

Belongs to the HisA/HisF family. Heterodimer of HisH and HisF.

It localises to the cytoplasm. The enzyme catalyses 5-[(5-phospho-1-deoxy-D-ribulos-1-ylimino)methylamino]-1-(5-phospho-beta-D-ribosyl)imidazole-4-carboxamide + L-glutamine = D-erythro-1-(imidazol-4-yl)glycerol 3-phosphate + 5-amino-1-(5-phospho-beta-D-ribosyl)imidazole-4-carboxamide + L-glutamate + H(+). The protein operates within amino-acid biosynthesis; L-histidine biosynthesis; L-histidine from 5-phospho-alpha-D-ribose 1-diphosphate: step 5/9. In terms of biological role, IGPS catalyzes the conversion of PRFAR and glutamine to IGP, AICAR and glutamate. The HisF subunit catalyzes the cyclization activity that produces IGP and AICAR from PRFAR using the ammonia provided by the HisH subunit. This Francisella philomiragia subsp. philomiragia (strain ATCC 25017 / CCUG 19701 / FSC 153 / O#319-036) protein is Imidazole glycerol phosphate synthase subunit HisF.